Here is a 103-residue protein sequence, read N- to C-terminus: Cycloviolacin-O9 (103 aa).

Residues alanine 1–alanine 9 form the signal peptide. Positions serine 10–asparagine 69 are excised as a propeptide. A cross-link (cyclopeptide (Gly-Asn)) is located at residues glycine 70–asparagine 99. Cystine bridges form between cysteine 73–cysteine 89, cysteine 77–cysteine 91, and cysteine 82–cysteine 96. The propeptide occupies serine 100–asparagine 103.

This is a cyclic peptide.

In terms of biological role, probably participates in a plant defense mechanism. The protein is Cycloviolacin-O9 of Viola biflora (Yellow wood violet).